The primary structure comprises 464 residues: MLCHITRPDSVVLEVEVDPKANGEDILNKICQKMGIIEVDYFGLQFTGTKGESLWMNLRNRICQEVDCVSPCRLRLRVKFFVEPHLILQEQTRHLFLMHVKEEIIKGSLRLDAEQAIELCALLAQAEFGDYKQNTAKYCYSQIYGQDPSHDTINTISLKHKSLEGVSQASAEYQALQLVSSLTYYGVEWHFARDSEGQQLLIGVGQEGLFVCKSDFTPIERLMYPVIQMATQSGRNVYVTITKDNGDSVVLLFKFVSPSAANGLYRAITEIHAFYRCDTVMSTVKMQYSRDFKGHLASLFLNESIDLGKRYIFDIQRTSKEVYDRTRRALFNAGVSVNGRGISRSLLRQTKVDREERMCVDCRETHVLKEKLQRLQEALTCALCCEQEISAAFCPCGHMFCCYNCASQLQCCPVCRSEVDRVQHVYLPTCASLLGLAEAKTTNSVLRRTGISEDCANKENARQM.

The 279-residue stretch at 1–279 (MLCHITRPDS…EIHAFYRCDT (279 aa)) folds into the FERM domain. The segment at 381-416 (CALCCEQEISAAFCPCGHMFCCYNCASQLQCCPVCR) adopts an RING-type zinc-finger fold.

Interacts with anxa5.

The protein localises to the cytoplasm. Its subcellular location is the cytosol. It catalyses the reaction S-ubiquitinyl-[E2 ubiquitin-conjugating enzyme]-L-cysteine + [acceptor protein]-L-lysine = [E2 ubiquitin-conjugating enzyme]-L-cysteine + N(6)-ubiquitinyl-[acceptor protein]-L-lysine.. It participates in protein modification; protein ubiquitination. Functionally, E3 ubiquitin-protein ligase that mediates ubiquitination and subsequent proteasomal degradation of myosin regulatory light chain (MRLC). Regulates cell movements during gastrulation by acting downstream of fz7 to antagonize the frizzled-signaling pathway. The protein is E3 ubiquitin-protein ligase MYLIP-B of Danio rerio (Zebrafish).